The sequence spans 303 residues: Foldase protein PrsA (303 aa).

An N-terminal signal peptide occupies residues 1–20 (MMKKWLLAAASLLMVVTLAG). Cysteine 21 carries N-palmitoyl cysteine lipidation. A lipid anchor (S-diacylglycerol cysteine) is attached at cysteine 21. One can recognise a PpiC domain in the interval 137-233 (EPKVEVQHIL…YGYHVIRMIK (97 aa)).

The protein belongs to the PrsA family.

Its subcellular location is the cell membrane. The enzyme catalyses [protein]-peptidylproline (omega=180) = [protein]-peptidylproline (omega=0). Its function is as follows. Plays a major role in protein secretion by helping the post-translocational extracellular folding of several secreted proteins. This chain is Foldase protein PrsA, found in Latilactobacillus sakei subsp. sakei (strain 23K) (Lactobacillus sakei subsp. sakei).